Consider the following 508-residue polypeptide: Aromatic-L-amino-acid decarboxylase (508 aa).

A substrate-binding site is contributed by Thr-82. 2 residues coordinate pyridoxal 5'-phosphate: Ala-148 and Ser-149. Residue His-192 participates in substrate binding. The pyridoxal 5'-phosphate site is built by Thr-246 and Asn-300. Lys-303 carries the N6-(pyridoxal phosphate)lysine modification.

This sequence belongs to the group II decarboxylase family. Homodimer. Requires pyridoxal 5'-phosphate as cofactor.

The enzyme catalyses L-dopa + H(+) = dopamine + CO2. The catalysed reaction is 5-hydroxy-L-tryptophan + H(+) = serotonin + CO2. Its function is as follows. Catalyzes the decarboxylation of L-3,4-dihydroxyphenylalanine (DOPA) to dopamine, L-5-hydroxytryptophan to serotonin and L-tryptophan to tryptamine. The protein is Aromatic-L-amino-acid decarboxylase (Ddc) of Manduca sexta (Tobacco hawkmoth).